We begin with the raw amino-acid sequence, 135 residues long: uncharacterized protein (135 aa).

A disordered region spans residues 1 to 80 (MRSSSLPGAR…QRGSCASANA (80 aa)). Gly residues predominate over residues 54-65 (GARGGGRRGWGG).

This is an uncharacterized protein from Homo sapiens (Human).